We begin with the raw amino-acid sequence, 198 residues long: Ribonuclease HII (198 aa).

The 189-residue stretch at 10-198 folds into the RNase H type-2 domain; it reads QLVAGVDEVG…PVKRALGLAS (189 aa). A divalent metal cation contacts are provided by aspartate 16, glutamate 17, and aspartate 108.

Belongs to the RNase HII family. The cofactor is Mn(2+). Mg(2+) serves as cofactor.

The protein resides in the cytoplasm. It catalyses the reaction Endonucleolytic cleavage to 5'-phosphomonoester.. Its function is as follows. Endonuclease that specifically degrades the RNA of RNA-DNA hybrids. In Shigella boydii serotype 4 (strain Sb227), this protein is Ribonuclease HII.